Here is a 224-residue protein sequence, read N- to C-terminus: MTKKICIAIDGPAAAGKSTVAKIVAKKLRFVYIDTGAMYRAVTYIALKNNIAYEDEKAIAALLQKTVIRFEPGEVQQVFVGSENVTEVIRSIEVTNHVSIVAAHPSIREALQERQQVFATEGGIVMDGRDIGTAVLPNAELKIFLLASVEERAERRYKENMAKGFTGDLDQLKKEIEERDHLDYTRTHSPLKKADDAIEVDTTSMSIDQVANKILSLAELKINN.

11-19 (GPAAAGKST) contributes to the ATP binding site.

Belongs to the cytidylate kinase family. Type 1 subfamily.

It is found in the cytoplasm. It catalyses the reaction CMP + ATP = CDP + ADP. The enzyme catalyses dCMP + ATP = dCDP + ADP. The polypeptide is Cytidylate kinase (Listeria monocytogenes serovar 1/2a (strain ATCC BAA-679 / EGD-e)).